The following is a 712-amino-acid chain: Zinc finger and BTB domain-containing protein 39 (712 aa).

Positions 30-96 constitute a BTB domain; sequence CDVTIVVGSR…VYTSELFTDL (67 aa). Disordered stretches follow at residues 129 to 162, 176 to 224, and 236 to 260; these read ARAKPLTSTSESHSGTLSCPSAEPAHPLGELRGG, SDAG…IPSM, and GIQTSTSSCQPYKVQSNGDFSKNSF. The span at 134–147 shows a compositional bias: polar residues; the sequence is LTSTSESHSGTLSC. Lys183 is covalently cross-linked (Glycyl lysine isopeptide (Lys-Gly) (interchain with G-Cter in SUMO2)). The segment at 372-394 adopts a C2H2-type 1 zinc-finger fold; that stretch reads GNCKVCETHFQDRNSRVTHVLSH. The C2H2-type 2; atypical zinc finger occupies 400-422; it reads FSCDMCETKFFTQWQLTLHRRDG. Lys439 is covalently cross-linked (Glycyl lysine isopeptide (Lys-Gly) (interchain with G-Cter in SUMO2)). A C2H2-type 3; atypical zinc finger spans residues 480-502; the sequence is QACSVCDQRHLNLCSLMWHTLSH. 4 C2H2-type zinc fingers span residues 508-530, 538-560, 605-627, and 633-655; these read FSCSVCANSFVDWHLLEKHMAVH, FHCRLCSQSFKSEAAYRYHVSQH, YSCKVCGKRFAHTSEFNYHRRIH, and YQCKVCHKFFRGRSTIKCHLKTH. A C2H2-type 8; atypical zinc finger spans residues 661–683; it reads YRCTVCGHYSSTLNLMSKHVGVH.

Belongs to the krueppel C2H2-type zinc-finger protein family.

It is found in the nucleus. Its function is as follows. May be involved in transcriptional regulation. The sequence is that of Zinc finger and BTB domain-containing protein 39 (ZBTB39) from Homo sapiens (Human).